A 405-amino-acid chain; its full sequence is Tryptophan synthase beta chain (405 aa).

Lys95 is modified (N6-(pyridoxal phosphate)lysine).

It belongs to the TrpB family. In terms of assembly, tetramer of two alpha and two beta chains. Pyridoxal 5'-phosphate serves as cofactor.

The enzyme catalyses (1S,2R)-1-C-(indol-3-yl)glycerol 3-phosphate + L-serine = D-glyceraldehyde 3-phosphate + L-tryptophan + H2O. It functions in the pathway amino-acid biosynthesis; L-tryptophan biosynthesis; L-tryptophan from chorismate: step 5/5. The beta subunit is responsible for the synthesis of L-tryptophan from indole and L-serine. This Pseudomonas entomophila (strain L48) protein is Tryptophan synthase beta chain.